Reading from the N-terminus, the 141-residue chain is Mite group 2 allergen Lep d 2 (141 aa).

The first 16 residues, 1 to 16, serve as a signal peptide directing secretion; that stretch reads MMKFIALFALVAVASA. Intrachain disulfides connect Cys24–Cys133, Cys37–Cys42, and Cys88–Cys93. 3 tandem repeats follow at residues 64–65, 68–69, and 72–73. A 3 X 2 AA repeats of K-V region spans residues 64 to 73; the sequence is KVTIKVLAKV.

The protein belongs to the NPC2 family. As to quaternary structure, monomer.

It localises to the secreted. This is Mite group 2 allergen Lep d 2 from Lepidoglyphus destructor (Storage mite).